The primary structure comprises 94 residues: Large ribosomal subunit protein uL23 (94 aa).

It belongs to the universal ribosomal protein uL23 family. As to quaternary structure, part of the 50S ribosomal subunit. Contacts protein L29, and trigger factor when it is bound to the ribosome.

In terms of biological role, one of the early assembly proteins it binds 23S rRNA. One of the proteins that surrounds the polypeptide exit tunnel on the outside of the ribosome. Forms the main docking site for trigger factor binding to the ribosome. This chain is Large ribosomal subunit protein uL23, found in Roseiflexus castenholzii (strain DSM 13941 / HLO8).